The sequence spans 3210 residues: PF 1022-synthetase (3210 aa).

The interval 68–454 is condensation 1; that stretch reads VDDRRHAIGH…VKELDVVTAE (387 aa). Residues 483–876 are adenylation 1; it reads AGDPNKAAVF…GRKDSQVKIR (394 aa). Residues 1010-1086 enclose the Carrier 1 domain; the sequence is APATGIEVKL…GLVDVIGRDP (77 aa). S1047 carries the post-translational modification O-(pantetheine 4'-phosphoryl)serine. Positions 1104–1534 are condensation 2; that stretch reads SFAQGRLWFL…RTPIAVLPLT (431 aa). The tract at residues 1563–2023 is adenylation 2; sequence FRKQVAAHPH…GRMDQQVKIR (461 aa). The tract at residues 2081–2236 is S-adenosyl-L-methionine-dependent N-methyltransferase; the sequence is EGWKDFFESN…YLLEVVESLV (156 aa). Carrier domains follow at residues 2570–2644 and 2668–2742; these read DPFV…RQGL and TPSD…RLTQ. O-(pantetheine 4'-phosphoryl)serine is present on residues S2604 and S2702. Positions 2788-3203 are condensation 3; the sequence is LDVYPATQMQ…KRMLEELCGN (416 aa). A disordered region spans residues 2976 to 3002; the sequence is VIKGNNNTTPPPPPQQQSTPSGAHHAS.

This sequence belongs to the NRP synthetase family. Pantetheine 4'-phosphate serves as cofactor.

It carries out the reaction 2 (R)-3-phenyllactate + 2 (R)-lactate + 4 L-leucine + 4 S-adenosyl-L-methionine + 8 ATP = PF1022A + 8 AMP + 4 S-adenosyl-L-homocysteine + 8 diphosphate + 8 H(+). The catalysed reaction is 4 (R)-3-phenyllactate + 4 L-leucine + 4 S-adenosyl-L-methionine + 8 ATP = PF1022B + 8 AMP + 4 S-adenosyl-L-homocysteine + 8 diphosphate + 8 H(+). It catalyses the reaction 3 (R)-3-phenyllactate + (R)-lactate + 4 L-leucine + 4 S-adenosyl-L-methionine + 8 ATP = PF1022C + 8 AMP + 4 S-adenosyl-L-homocysteine + 8 diphosphate + 8 H(+). The enzyme catalyses (R)-3-phenyllactate + 3 (R)-lactate + 4 L-leucine + 4 S-adenosyl-L-methionine + 8 ATP = PF1022D + 8 AMP + 4 S-adenosyl-L-homocysteine + 8 diphosphate + 8 H(+). It carries out the reaction 4 (R)-lactate + 4 L-leucine + 4 S-adenosyl-L-methionine + 8 ATP = PF1022F + 8 AMP + 4 S-adenosyl-L-homocysteine + 8 diphosphate + 8 H(+). Functionally, nonribosomal peptide synthetase that synthesizes cyclooctadepsipeptides (CODPs) PF 1022 that show powerful broad-spectrum anthelmintic activity with low toxicity in animals. Couples 4 N-methyl-L-leucines and a varying content of alpha-D-hydroxy acids (D-lactates or D-phenyllactates) in an alternative fashion. The enzyme is capable of synthesizing all known natural cyclooctadepsipeptides of the PF1022 type differing in the content of D-lactate and D-phenyllactate, using from 4 D-lactates (PF 1022F) to 4 D-phenyllactates (PF 1022B), respectively. The formation of different PF-related compounds is mainly controlled by the molar ratio of the hydroxy acids. N-methylation of the substrate L-leucine takes place after covalent binding prior to peptide bond formation. This is PF 1022-synthetase from Rosellinia sp. (Mycelia sterilia).